A 594-amino-acid chain; its full sequence is ATP-dependent RNA helicase DBP9 (594 aa).

The short motif at 15-43 (SSFDSFHLDSRLSQAIRSIGFKHPTLIQS) is the Q motif element. Positions 47 to 229 (PLALQEKRDI…QQFCRSPAIL (183 aa)) constitute a Helicase ATP-binding domain. ATP is bound at residue 60-67 (ASTGSGKT). The DEAD box signature appears at 175–178 (DEVD). The Helicase C-terminal domain occupies 242-474 (KLIQYYVKVG…PYNFDIKQVE (233 aa)). A disordered region spans residues 562–594 (PFHKNSHRKNGRVVKKKGNVQRKGKSDPLKSFK). Residues 565-584 (KNSHRKNGRVVKKKGNVQRK) show a composition bias toward basic residues. The span at 585-594 (GKSDPLKSFK) shows a compositional bias: basic and acidic residues.

This sequence belongs to the DEAD box helicase family. DDX56/DBP9 subfamily.

It localises to the nucleus. It is found in the nucleolus. The enzyme catalyses ATP + H2O = ADP + phosphate + H(+). Its function is as follows. ATP-binding RNA helicase involved in the biogenesis of 60S ribosomal subunits and is required for the normal formation of 25S and 5.8S rRNAs. The polypeptide is ATP-dependent RNA helicase DBP9 (DBP9) (Kluyveromyces lactis (strain ATCC 8585 / CBS 2359 / DSM 70799 / NBRC 1267 / NRRL Y-1140 / WM37) (Yeast)).